A 259-amino-acid chain; its full sequence is 3-deoxy-manno-octulosonate cytidylyltransferase (259 aa).

Belongs to the KdsB family.

It localises to the cytoplasm. The enzyme catalyses 3-deoxy-alpha-D-manno-oct-2-ulosonate + CTP = CMP-3-deoxy-beta-D-manno-octulosonate + diphosphate. The protein operates within nucleotide-sugar biosynthesis; CMP-3-deoxy-D-manno-octulosonate biosynthesis; CMP-3-deoxy-D-manno-octulosonate from 3-deoxy-D-manno-octulosonate and CTP: step 1/1. Its pathway is bacterial outer membrane biogenesis; lipopolysaccharide biosynthesis. Activates KDO (a required 8-carbon sugar) for incorporation into bacterial lipopolysaccharide in Gram-negative bacteria. The sequence is that of 3-deoxy-manno-octulosonate cytidylyltransferase from Xanthomonas oryzae pv. oryzae (strain KACC10331 / KXO85).